Consider the following 303-residue polypeptide: 1D-myo-inositol 2-acetamido-2-deoxy-alpha-D-glucopyranoside deacetylase (303 aa).

Residues His13, Asp16, and His147 each contribute to the Zn(2+) site.

Belongs to the MshB deacetylase family. Zn(2+) is required as a cofactor.

It carries out the reaction 1D-myo-inositol 2-acetamido-2-deoxy-alpha-D-glucopyranoside + H2O = 1D-myo-inositol 2-amino-2-deoxy-alpha-D-glucopyranoside + acetate. In terms of biological role, catalyzes the deacetylation of 1D-myo-inositol 2-acetamido-2-deoxy-alpha-D-glucopyranoside (GlcNAc-Ins) in the mycothiol biosynthesis pathway. This Mycobacterium tuberculosis (strain ATCC 25177 / H37Ra) protein is 1D-myo-inositol 2-acetamido-2-deoxy-alpha-D-glucopyranoside deacetylase.